An 88-amino-acid polypeptide reads, in one-letter code: Small ribosomal subunit protein bS20 (88 aa).

The tract at residues 1–21 (MANSAQAKKRARQNVKARKHN) is disordered. Over residues 7-21 (AKKRARQNVKARKHN) the composition is skewed to basic residues.

This sequence belongs to the bacterial ribosomal protein bS20 family.

Its function is as follows. Binds directly to 16S ribosomal RNA. The protein is Small ribosomal subunit protein bS20 of Acinetobacter baumannii (strain AB307-0294).